The sequence spans 447 residues: Omega-6 fatty acid desaturase, chloroplastic (447 aa).

The N-terminal 65 residues, 1–65, are a transit peptide targeting the chloroplast; that stretch reads MESAITISNH…TRRKSTLVQA (65 aa). An N-acetylvaline modification is found at V66. The Histidine box-1 signature appears at 171-175; the sequence is HDCAH. The short motif at 207 to 211 is the Histidine box-2 element; the sequence is HDQHH. Residues 367 to 371 carry the Histidine box-3 motif; it reads HIPHH.

The protein belongs to the fatty acid desaturase type 1 family.

It localises to the plastid. The protein resides in the chloroplast membrane. It catalyses the reaction a (9Z)-octadecenoyl-containing glycerolipid + 2 reduced [2Fe-2S]-[ferredoxin] + O2 + 2 H(+) = a (9Z,12Z)-octadecadienoyl-containing glycerolipid + 2 oxidized [2Fe-2S]-[ferredoxin] + 2 H2O. Its pathway is lipid metabolism; polyunsaturated fatty acid biosynthesis. Functionally, chloroplast omega-6 fatty acid desaturase introduces the second double bond in the biosynthesis of 16:3 and 18:3 fatty acids, important constituents of plant membranes. It is thought to use ferredoxin as an electron donor and to act on fatty acids esterified to galactolipids, sulfolipids and phosphatidylglycerol. The chain is Omega-6 fatty acid desaturase, chloroplastic from Spinacia oleracea (Spinach).